Consider the following 177-residue polypeptide: Large ribosomal subunit protein uL6 (177 aa).

It belongs to the universal ribosomal protein uL6 family. In terms of assembly, part of the 50S ribosomal subunit.

Its function is as follows. This protein binds to the 23S rRNA, and is important in its secondary structure. It is located near the subunit interface in the base of the L7/L12 stalk, and near the tRNA binding site of the peptidyltransferase center. This Methylocella silvestris (strain DSM 15510 / CIP 108128 / LMG 27833 / NCIMB 13906 / BL2) protein is Large ribosomal subunit protein uL6.